Consider the following 404-residue polypeptide: Imidazolonepropionase (404 aa).

Fe(3+)-binding residues include H73 and H75. H73 and H75 together coordinate Zn(2+). 3 residues coordinate 4-imidazolone-5-propanoate: R82, Y145, and H178. Y145 contributes to the N-formimidoyl-L-glutamate binding site. Fe(3+) is bound at residue H243. Zn(2+) is bound at residue H243. Q246 serves as a coordination point for 4-imidazolone-5-propanoate. Position 318 (D318) interacts with Fe(3+). D318 is a Zn(2+) binding site. Residues N320 and G322 each coordinate N-formimidoyl-L-glutamate. Residue S323 participates in 4-imidazolone-5-propanoate binding.

The protein belongs to the metallo-dependent hydrolases superfamily. HutI family. It depends on Zn(2+) as a cofactor. Fe(3+) is required as a cofactor.

It localises to the cytoplasm. It catalyses the reaction 4-imidazolone-5-propanoate + H2O = N-formimidoyl-L-glutamate. The protein operates within amino-acid degradation; L-histidine degradation into L-glutamate; N-formimidoyl-L-glutamate from L-histidine: step 3/3. Its function is as follows. Catalyzes the hydrolytic cleavage of the carbon-nitrogen bond in imidazolone-5-propanoate to yield N-formimidoyl-L-glutamate. It is the third step in the universal histidine degradation pathway. In Bradyrhizobium sp. (strain BTAi1 / ATCC BAA-1182), this protein is Imidazolonepropionase.